The following is a 317-amino-acid chain: tRNA pseudouridine synthase B (317 aa).

Residue Asp47 is the Nucleophile of the active site.

Belongs to the pseudouridine synthase TruB family. Type 1 subfamily.

The enzyme catalyses uridine(55) in tRNA = pseudouridine(55) in tRNA. Functionally, responsible for synthesis of pseudouridine from uracil-55 in the psi GC loop of transfer RNAs. This Shewanella woodyi (strain ATCC 51908 / MS32) protein is tRNA pseudouridine synthase B.